The following is a 303-amino-acid chain: Olfactory receptor 10A2 (303 aa).

Topologically, residues 1-12 (MSFSSLPTEIQS) are extracellular. The helical transmembrane segment at 13-33 (LLFLTFLTIYLVTLMGNCLII) threads the bilayer. Topologically, residues 34 to 41 (LVTLADPM) are cytoplasmic. A helical transmembrane segment spans residues 42–62 (LHSPMYFFLRNLSFLEIGFNL). The Extracellular segment spans residues 63–86 (VIVPKMLGTLLAQDTTISFLGCAT). Cysteine 84 and cysteine 176 form a disulfide bridge. The helical transmembrane segment at 87-107 (QMYFFFFFGVAECFLLATMAY) threads the bilayer. The Cytoplasmic portion of the chain corresponds to 108–126 (DRYVAICSPLHYPVIMNQR). A helical membrane pass occupies residues 127-147 (TRAKLAAASWFPGFPVATVQT). The Extracellular segment spans residues 148 to 184 (TWLFSFPFCGTNKVNHFFCDSPPVLRLVCADTALFEI). The helical transmembrane segment at 185–204 (YAIVGTILVVMIPCLLILCS) threads the bilayer. Residues 205-224 (YTHIAAAILKIPSAKGKNKA) are Cytoplasmic-facing. Residues 225–245 (FSTCSSHLLVVSLFYISLSLT) traverse the membrane as a helical segment. The Extracellular segment spans residues 246–258 (YFRPKSNNSPEGK). A helical membrane pass occupies residues 259–279 (KLLSLSYTVMTPMLNPIIYSL). At 280 to 301 (RNNEVKNALSRTVSKALALRNC) the chain is on the cytoplasmic side.

This sequence belongs to the G-protein coupled receptor 1 family.

Its subcellular location is the cell membrane. Its function is as follows. Odorant receptor. This chain is Olfactory receptor 10A2 (OR10A2), found in Homo sapiens (Human).